Reading from the N-terminus, the 223-residue chain is Ribose-5-phosphate isomerase A (223 aa).

Substrate contacts are provided by residues 28 to 31 (TGST), 81 to 84 (DGAD), and 94 to 97 (KGGG). Glu-103 acts as the Proton acceptor in catalysis. Position 121 (Lys-121) interacts with substrate.

It belongs to the ribose 5-phosphate isomerase family. Homodimer.

It catalyses the reaction aldehydo-D-ribose 5-phosphate = D-ribulose 5-phosphate. It functions in the pathway carbohydrate degradation; pentose phosphate pathway; D-ribose 5-phosphate from D-ribulose 5-phosphate (non-oxidative stage): step 1/1. Catalyzes the reversible conversion of ribose-5-phosphate to ribulose 5-phosphate. The chain is Ribose-5-phosphate isomerase A from Janthinobacterium sp. (strain Marseille) (Minibacterium massiliensis).